Reading from the N-terminus, the 1496-residue chain is Carbamoyl-phosphate synthase [ammonia], mitochondrial (1496 aa).

The transit peptide at 1 to 33 (MTRILSVFKTAKTGVLNAAAHRYRGFSKAGVRL) directs the protein to the mitochondrion. An anthranilate phosphoribosyltransferase homolog region spans residues 34-214 (MSVKAQTANL…TKVFGKGNPV (181 aa)). Positions 215–401 (RIVAVDCGVK…MSLIKKGKGT (187 aa)) constitute a Glutamine amidotransferase type-1 domain. Residue C290 is the For GATase activity of the active site. ATP-grasp domains follow at residues 548–740 (SDKL…KIAL) and 1090–1281 (SAVL…KVMI). One can recognise an MGS-like domain in the interval 1352–1496 (FKLPQKGILI…YRQFGGAKPS (145 aa)). Positions 1388, 1391, 1407, 1433, 1436, and 1445 each coordinate N-acetyl-L-glutamate.

It is found in the mitochondrion. It catalyses the reaction hydrogencarbonate + NH4(+) + 2 ATP = carbamoyl phosphate + 2 ADP + phosphate + 2 H(+). With respect to regulation, requires N-acetyl-L-glutamate (NAG) as an allosteric activator. In terms of biological role, involved in the urea cycle of ureotelic animals where the enzyme plays an important role in removing excess ammonia from the cell. This chain is Carbamoyl-phosphate synthase [ammonia], mitochondrial, found in Aquarana catesbeiana (American bullfrog).